Here is a 677-residue protein sequence, read N- to C-terminus: Mitochondrial disaggregase (677 aa).

A mitochondrion-targeting transit peptide spans 1–57; that stretch reads MMLSAVLRRTAPAPRLFLGLIKSPSLQSRGGAYNRSVITGDRGEPQRLRTAAWVRPG. The interval 64–103 is disordered; that stretch reads PGRGAATGGRRGERTEIPYLTAASSGRGPSPEETLPGQDS. Positions 92-126 are autoinhibitory; the sequence is PSPEETLPGQDSWNGVPNKAGLGMWALAMALVVQC. ANK repeat units follow at residues 133–162, 166–195, 235–265, and 268–297; these read NKDA…DVNA, LGWT…DPNL, KGCT…PLQR, and MGHT…EKQR. ATP-binding residues include His-316, Ile-318, Ser-353, Gly-354, Ile-355, Gly-356, Lys-357, Thr-358, Glu-425, and Asn-466. The tract at residues 477 to 505 is regulatory; slows ATPase and disaggregase activities; it reads LQLRQEALEMSRNRIAENLGDVQISDKIT. Arg-531 contacts ATP. Lys-559 carries the N6-acetyllysine modification. Arg-590 is an ATP binding site.

This sequence belongs to the ClpA/ClpB family. In terms of assembly, homododecamer when substrate-bound; the homododecamer consists of 2 homohexamers stacked head-to-head via ANK repeat-mediated interactions. The active substrate-bound form is likely to exist in a dynamic equilibrium between homohexamers and homododecamers. Homotetradecamer in the unbound state which is remodeled upon substrate binding into the homododecamer. Interacts with PHB and PHB2. Interacts with MAVS; the interaction is enhanced by Sendai virus infection. Post-translationally, proteolytically cleaved by protease PARL. ATP-dependent protein disaggregase activity is stimulated by PARL-mediated cleavage of the N-terminal autoinhibitory peptide.

Its subcellular location is the mitochondrion intermembrane space. The catalysed reaction is ATP + H2O = ADP + phosphate + H(+). Its activity is regulated as follows. Disaggregase activity is inhibited by ADP. Functions as a regulatory ATPase and participates in secretion/protein trafficking process. Has ATP-dependent protein disaggregase activity and is required to maintain the solubility of key mitochondrial proteins. Involved in mitochondrial-mediated antiviral innate immunity, activates RIG-I-mediated signal transduction and production of IFNB1 and pro-inflammatory cytokine IL6. Plays a role in granulocyte differentiation. The sequence is that of Mitochondrial disaggregase from Rattus norvegicus (Rat).